A 453-amino-acid polypeptide reads, in one-letter code: Putative sodium-coupled neutral amino acid transporter 11 (453 aa).

A compositionally biased stretch (polar residues) spans Met-1–Gly-10. Residues Met-1 to Ser-34 form a disordered region. The segment covering Arg-14–Gly-32 has biased composition (basic and acidic residues). 11 helical membrane passes run Ala-39–Met-59, Leu-66–Ile-86, Gly-106–Ile-126, Gly-150–Leu-170, Leu-179–Thr-199, Ala-222–Val-242, Ile-262–Gly-282, Val-299–Phe-319, Val-337–Ile-357, Cys-359–Ile-379, and Ile-398–Ala-418. 2 N-linked (GlcNAc...) asparagine glycosylation sites follow: Asn-438 and Asn-443.

This sequence belongs to the amino acid/polyamine transporter 2 family.

It is found in the membrane. In terms of biological role, putative sodium-dependent amino acid/proton antiporter. The chain is Putative sodium-coupled neutral amino acid transporter 11 (Slc38a11) from Mus musculus (Mouse).